A 306-amino-acid polypeptide reads, in one-letter code: Probable 2-dehydro-3-deoxygalactonokinase DgoK1 (306 aa).

Belongs to the DgoK family.

It carries out the reaction 2-dehydro-3-deoxy-D-galactonate + ATP = 2-dehydro-3-deoxy-6-phospho-D-galactonate + ADP + H(+). It participates in carbohydrate acid metabolism; D-galactonate degradation; D-glyceraldehyde 3-phosphate and pyruvate from D-galactonate: step 2/3. In terms of biological role, involved in the degradation of galactose via the DeLey-Doudoroff pathway. The sequence is that of Probable 2-dehydro-3-deoxygalactonokinase DgoK1 (dgoK1) from Rhizobium meliloti (strain 1021) (Ensifer meliloti).